A 2365-amino-acid chain; its full sequence is Voltage-dependent T-type calcium channel subunit alpha-1H (2365 aa).

Residues 1 to 63 (MTEGTLAADE…PGTECGADLG (63 aa)) are disordered. At 1–100 (MTEGTLAADE…SWCLRLVSRR (100 aa)) the chain is on the cytoplasmic side. Low complexity predominate over residues 16 to 36 (GASPSAPAAPVRASPASPGVP). One copy of the I repeat lies at 87-422 (TRPRSWCLRL…LCLVVIATQF (336 aa)). Residues 101–119 (WFEHISMLVIMLNCVTLGM) traverse the membrane as a helical segment. The Extracellular portion of the chain corresponds to 120–141 (FRPCEDVECRSERCSILEAFDD). Position 140 (D140) interacts with Zn(2+). The helical transmembrane segment at 142–160 (FIFAFFAVEMVIKMVALGL) threads the bilayer. Residues 161 to 169 (FGQKCYLGD) are Cytoplasmic-facing. A helical transmembrane segment spans residues 170–184 (TWNRLDFFIVMAGMM). Residues 185–193 (EYSLDGHNV) are Extracellular-facing. Residues D189 and H191 each contribute to the Zn(2+) site. N192 carries N-linked (GlcNAc...) asparagine glycosylation. Residues 194–212 (SLSAIRTVRVLRPLRAINR) form a helical membrane-spanning segment. The Cytoplasmic portion of the chain corresponds to 213-232 (VPSMRILVTLLLDTLPMLGN). The chain crosses the membrane as a helical span at residues 233-253 (VLLLCFFVFFIFGIVGVQLWA). The Extracellular segment spans residues 254 to 394 (GLLRNRCFLD…YYVMDAHSFY (141 aa)). N-linked (GlcNAc...) asparagine glycosylation occurs at N271. The chain crosses the membrane as a helical span at residues 395–419 (NFIYFILLIIVGSFFMINLCLVVIA). Topologically, residues 420–790 (TQFSETKQRE…SKLRRIVDSK (371 aa)) are cytoplasmic. Disordered regions lie at residues 490-573 (VDPS…SESV), 618-656 (PSGA…SPSP), and 737-761 (GDCR…RWRP). Residues 500-532 (GPRRRPRRAGRRTASVHHLVYHHHHHHHHHYHF) are compositionally biased toward basic residues. The span at 557–566 (PPSPPSPGHG) shows a compositional bias: pro residues. Residues 621 to 631 (AVNSKGSTSSR) are compositionally biased toward polar residues. One copy of the II repeat lies at 776–1015 (WASFSSKLRR…LLVAILVEGF (240 aa)). The chain crosses the membrane as a helical span at residues 791–811 (YFNRGIMAAILVNTLSMGVEY). The Extracellular segment spans residues 812–824 (HEQPDELTNALEI). A helical membrane pass occupies residues 825–846 (SNIVFTSMFALEMLLKLLACGP). At 847–852 (LGYIRN) the chain is on the cytoplasmic side. The chain crosses the membrane as a helical span at residues 853–871 (PYNIFDGIVVIISVWEIVG). The Extracellular segment spans residues 872–879 (QADGGLSV). Residues 880-903 (LRTFRLLRVLKLVRFLPALRRQLV) form a helical membrane-spanning segment. Residues 904-914 (VLMRTMDNVAT) lie on the Cytoplasmic side of the membrane. Residues 915-935 (FCMLLMLFIFIFSILGMHLFG) traverse the membrane as a helical segment. The Extracellular portion of the chain corresponds to 936-987 (CKFSLKTDSGDTVPDRKNFDSLLWAIVTVFQILTQEDWNVVLYNGMASTSSW). The chain crosses the membrane as a helical span at residues 988–1012 (AALYFVALMTFGNYVLFNLLVAILV). The Cytoplasmic segment spans residues 1013 to 1301 (EGFQAEGDAT…NRLRVSCQKV (289 aa)). Residues 1059–1215 (PNGHLEGRGS…HRSTMDLCPP (157 aa)) form a disordered region. Low complexity predominate over residues 1130-1147 (GPNSAGSSRRSSWNSLGR). A compositionally biased stretch (basic and acidic residues) spans 1199–1209 (RRAESLGHRST). An III repeat occupies 1292–1569 (NRLRVSCQKV…MFVGVVVENF (278 aa)). A helical membrane pass occupies residues 1302–1324 (IAHKMFDHVVLVFIFLNCITIAL). The Extracellular portion of the chain corresponds to 1325-1342 (ERPDIDPGSTERAFLSVS). A helical membrane pass occupies residues 1343 to 1363 (NYIFTAIFVVEMMVKVVALGL). At 1364–1373 (LWGEHAYLQS) the chain is on the cytoplasmic side. The helical transmembrane segment at 1374 to 1393 (SWNVLDGLLVLVSLVDIIVA) threads the bilayer. The Extracellular segment spans residues 1394–1407 (VASAGGAKILGVLR). The chain crosses the membrane as a helical span at residues 1408–1429 (VLRLLRTLRPLRVISRAPGLKL). Residues 1430-1439 (VVETLISSLR) are Cytoplasmic-facing. Residues 1440–1463 (PIGNIVLICCAFFIIFGILGVQLF) form a helical membrane-spanning segment. Over 1464 to 1540 (KGKFYYCEGT…DQQPVQNHNP (77 aa)) the chain is Extracellular. N1477 carries N-linked (GlcNAc...) asparagine glycosylation. The helical transmembrane segment at 1541 to 1566 (WMLLYFISFLLIVSFFVLNMFVGVVV) threads the bilayer. The Cytoplasmic portion of the chain corresponds to 1567 to 1627 (ENFHKCRQHQ…RRSIHSLCTS (61 aa)). An IV repeat occupies 1613–1874 (DYSHTRRSIH…VVVAVLMKHL (262 aa)). The chain crosses the membrane as a helical span at residues 1628-1648 (HYLDLFITFIICLNVITMSME). Residues 1649 to 1662 (HYNQPKSLDEALKY) are Extracellular-facing. A helical transmembrane segment spans residues 1663–1684 (CNYVFTIVFVFEAALKLVAFGF). Over 1685–1691 (RRFFKDR) the chain is Cytoplasmic. The chain crosses the membrane as a helical span at residues 1692-1710 (WNQLDLAIVLLSIMGIALE). Topologically, residues 1711 to 1724 (EIEMNAALPINPTI) are extracellular. The chain crosses the membrane as a helical span at residues 1725–1748 (IRIMRVLRIARVLKLLKMATGMRA). Residues 1749-1762 (LLDTVVQALPQVGN) lie on the Cytoplasmic side of the membrane. Residues 1763–1783 (LGLLFMLLFFIYAALGVELFG) traverse the membrane as a helical segment. The Extracellular segment spans residues 1784 to 1846 (RLECSEDNPC…KHCLSYLPAL (63 aa)). Residues 1847–1874 (SPVYFVTFVLVAQFVLVNVVVAVLMKHL) form a helical membrane-spanning segment. Topologically, residues 1875–2365 (EESNKEARED…APDDSGDEPV (491 aa)) are cytoplasmic. 2 stretches are compositionally biased toward polar residues: residues 1897-1916 (QGST…TEPD) and 1967-1983 (VTSA…SFQV). Disordered stretches follow at residues 1897 to 1920 (QGST…TPNL), 1967 to 1999 (VTSA…PLCA), 2053 to 2264 (APLG…GERW), and 2321 to 2365 (ELSM…DEPV). The segment covering 2092–2102 (DDAEAADPADE) has biased composition (acidic residues). Over residues 2172-2187 (GDGHLESGEVRARASE) the composition is skewed to basic and acidic residues.

This sequence belongs to the calcium channel alpha-1 subunit (TC 1.A.1.11) family. CACNA1H subfamily. In terms of assembly, interacts (via N-terminal cytoplasmic domain) with STAC. Post-translationally, in response to raising of intracellular calcium, the T-type channels are activated by CaM-kinase II. Is highly expressed in lumbosacral and thoracolumbar dorsal root ganglion neurons.

The protein localises to the cell membrane. It catalyses the reaction Ca(2+)(in) = Ca(2+)(out). Voltage-sensitive calcium channel that gives rise to T-type calcium currents. T-type calcium channels belong to the 'low-voltage activated (LVA)' group. A particularity of this type of channel is an opening at quite negative potentials, and a voltage-dependent inactivation. T-type channels serve pacemaking functions in both central neurons and cardiac nodal cells and support calcium signaling in secretory cells and vascular smooth muscle. They may also be involved in the modulation of firing patterns of neurons. In the adrenal zona glomerulosa, participates in the signaling pathway leading to aldosterone production in response to either AGT/angiotensin II, or hyperkalemia. This chain is Voltage-dependent T-type calcium channel subunit alpha-1H (Cacna1h), found in Mus musculus (Mouse).